The following is a 327-amino-acid chain: Malate dehydrogenase (327 aa).

12–18 (GAAGQIA) serves as a coordination point for NAD(+). Substrate contacts are provided by Arg-93 and Arg-99. Residues Asn-106, Gln-113, and 130 to 132 (VGN) each bind NAD(+). Substrate contacts are provided by Asn-132 and Arg-163. His-188 functions as the Proton acceptor in the catalytic mechanism.

Belongs to the LDH/MDH superfamily. MDH type 2 family.

It catalyses the reaction (S)-malate + NAD(+) = oxaloacetate + NADH + H(+). Functionally, catalyzes the reversible oxidation of malate to oxaloacetate. The sequence is that of Malate dehydrogenase from Burkholderia mallei (strain NCTC 10247).